A 196-amino-acid polypeptide reads, in one-letter code: Imidazoleglycerol-phosphate dehydratase (196 aa).

The protein belongs to the imidazoleglycerol-phosphate dehydratase family.

It localises to the cytoplasm. The catalysed reaction is D-erythro-1-(imidazol-4-yl)glycerol 3-phosphate = 3-(imidazol-4-yl)-2-oxopropyl phosphate + H2O. Its pathway is amino-acid biosynthesis; L-histidine biosynthesis; L-histidine from 5-phospho-alpha-D-ribose 1-diphosphate: step 6/9. In Chlorobium chlorochromatii (strain CaD3), this protein is Imidazoleglycerol-phosphate dehydratase.